Reading from the N-terminus, the 205-residue chain is Probable GTP-binding protein EngB (205 aa).

Residues 27-201 (QGMEVAFAGR…QNKLNAWFSG (175 aa)) form the EngB-type G domain. Residues 35–42 (GRSNAGKS), 62–66 (GRTQL), 80–83 (DLPG), 147–150 (TKVD), and 180–182 (FSS) each bind GTP. 2 residues coordinate Mg(2+): Ser42 and Thr64.

It belongs to the TRAFAC class TrmE-Era-EngA-EngB-Septin-like GTPase superfamily. EngB GTPase family. Requires Mg(2+) as cofactor.

Its function is as follows. Necessary for normal cell division and for the maintenance of normal septation. In Hamiltonella defensa subsp. Acyrthosiphon pisum (strain 5AT), this protein is Probable GTP-binding protein EngB.